The following is a 173-amino-acid chain: Small ribosomal subunit protein uS5 (173 aa).

An S5 DRBM domain is found at 17–80 (WQERVIQIRR…ADGKKQLIEV (64 aa)).

The protein belongs to the universal ribosomal protein uS5 family. As to quaternary structure, part of the 30S ribosomal subunit. Contacts proteins S4 and S8.

In terms of biological role, with S4 and S12 plays an important role in translational accuracy. Its function is as follows. Located at the back of the 30S subunit body where it stabilizes the conformation of the head with respect to the body. This is Small ribosomal subunit protein uS5 from Gloeothece citriformis (strain PCC 7424) (Cyanothece sp. (strain PCC 7424)).